Here is a 138-residue protein sequence, read N- to C-terminus: Holo-[acyl-carrier-protein] synthase (138 aa).

2 residues coordinate Mg(2+): Asp-11 and Glu-65.

Belongs to the P-Pant transferase superfamily. AcpS family. The cofactor is Mg(2+).

It localises to the cytoplasm. The enzyme catalyses apo-[ACP] + CoA = holo-[ACP] + adenosine 3',5'-bisphosphate + H(+). Functionally, transfers the 4'-phosphopantetheine moiety from coenzyme A to a Ser of acyl-carrier-protein. In Ralstonia nicotianae (strain ATCC BAA-1114 / GMI1000) (Ralstonia solanacearum), this protein is Holo-[acyl-carrier-protein] synthase.